The following is a 342-amino-acid chain: S-adenosylmethionine:tRNA ribosyltransferase-isomerase (342 aa).

The protein belongs to the QueA family. In terms of assembly, monomer.

It is found in the cytoplasm. It carries out the reaction 7-aminomethyl-7-carbaguanosine(34) in tRNA + S-adenosyl-L-methionine = epoxyqueuosine(34) in tRNA + adenine + L-methionine + 2 H(+). Its pathway is tRNA modification; tRNA-queuosine biosynthesis. Transfers and isomerizes the ribose moiety from AdoMet to the 7-aminomethyl group of 7-deazaguanine (preQ1-tRNA) to give epoxyqueuosine (oQ-tRNA). The sequence is that of S-adenosylmethionine:tRNA ribosyltransferase-isomerase from Streptococcus pneumoniae (strain Hungary19A-6).